The sequence spans 407 residues: Peptidase T (407 aa).

His82 contacts Zn(2+). Asp84 is a catalytic residue. Asp143 is a binding site for Zn(2+). Glu177 acts as the Proton acceptor in catalysis. Residues Glu178, Asp200, and His382 each contribute to the Zn(2+) site.

The protein belongs to the peptidase M20B family. The cofactor is Zn(2+).

It localises to the cytoplasm. The enzyme catalyses Release of the N-terminal residue from a tripeptide.. In terms of biological role, cleaves the N-terminal amino acid of tripeptides. This chain is Peptidase T, found in Streptococcus pyogenes serotype M1.